We begin with the raw amino-acid sequence, 971 residues long: MSSDLYANAVLYSEISQRNPELVSKMFNEATRKKLDAFLKDNEAPKLKDIVTDNVFKKRKRIASSSGNEPPVKKMAAKDSSDSDSSDDGAVKKNGVQKPVNVAAKKSATPVQKKAESSSSSDSDAPAKKLTPVKKPAQTPAQKKAASSSDSDSDDEPPKKAPAVTTKVAPKPMAKKQDTSDSDSDSEDSDDGKSKKANPVKVTPVANVLQKVVAKKAASSSSDSSDDEKKPAAKPTPAKPTPKPVVKKAESSSDSSDDEKKPVAKPAPAKATPKPAAKKADSSSDSSDDEAPAKKTPAKAAPKPVAKKAESSSDSSDDEKKPAAKPTPAKATPKPVAKKAESSSDSSDDEKKPVAKPAPAKATPKPVAKKAESSSDSSDDEKKPAAKPTPAKATPKPVAKKAESSSDSSDDEKKPVAKPTSAKATPKPAAKKADSSSDSSDDEAPAKKTPAKAAPKPASKKAESSSDSSDDEKPAAKSTPAKITPKPTAKKVASSSSDSSDDEKKPAAKPTPANATPKPVAKKAESSSDSSDDEKKPVAKPTSAKATPKPAAKKADLSSDFSDDEAPAKKTPAKAAPKPASKKAESSSDSSDDEKPAAKSTPAKTTPKPTAKKAASSSSDSSDDEKKPVAKPTSAKATPKPAAKKADSSSDSSDDEAPAKKTPVKPTPVKIVAKKVDSSSDSSDDEKKPTKATPVKVTPKSVTKKAAASSSDSSDDEKKPVVKQTPNVVPKKEKAASSSDDSSDDEKKPTAKPTPKATPKQSAKKADSSDDSSDDEAPAKKTPAKSTPAKTAVKKEASSSSDDSSDDEKTKKKSATTPAKSTPKTALKKAESSDSSDDDEDLPKPSKAVTPRPQRADSEESAETEESSSRTPALKAKPLATSTEKAVYENRKRKSSPFRRVQMTKDSVSEKFRNNQHDSHFDQWGQRANESLGKVVGKAFRHEKTKKKKGSYGGGPINQSINSIKFSDSDD.

Disordered regions lie at residues 61-926 (RIAS…QWGQ) and 938-971 (KAFRHEKTKKKKGSYGGGPINQSINSIKFSDSDD). Residues 134-150 (KKPAQTPAQKKAASSSD) show a composition bias toward low complexity. Residues 180-190 (SDSDSDSEDSD) are compositionally biased toward acidic residues. Composition is skewed to low complexity over residues 264–275 (AKPAPAKATPKP), 294–304 (KKTPAKAAPKP), 324–335 (AKPTPAKATPKP), 355–366 (AKPAPAKATPKP), 386–397 (AKPTPAKATPKP), 417–428 (AKPTSAKATPKP), 447–457 (KKTPAKAAPKP), 476–498 (AKSTPAKITPKPTAKKVASSSSD), 508–519 (AKPTPANATPKP), 539–550 (AKPTSAKATPKP), 569–579 (KKTPAKAAPKP), 598–620 (AKSTPAKTTPKPTAKKAASSSSD), 630–641 (AKPTSAKATPKP), 691–712 (KATPVKVTPKSVTKKAAASSSD), 751–761 (AKPTPKATPKQ), 780–791 (KKTPAKSTPAKT), and 815–825 (ATTPAKSTPKT). The segment covering 907–921 (SVSEKFRNNQHDSHF) has biased composition (basic and acidic residues). Residues 939–950 (AFRHEKTKKKKG) show a composition bias toward basic residues. A compositionally biased stretch (polar residues) spans 957-971 (INQSINSIKFSDSDD).

The protein belongs to the NOLC1 family. As to quaternary structure, may form dimers. Interacts with RNA polymerase I. Expressed in the nerve ring and hypodermal tissues. Expressed in the intestine. Expressed in the germline.

The protein localises to the nucleus. It localises to the nucleolus. The protein resides in the nucleoplasm. Its function is as follows. Nucleolar protein which binds to RNA polymerase I and rDNA and is required for efficient RNA polymerase I-mediated rDNA transcription. Maintains the epigenetically active status of rDNA chromatin which facilitates rDNA transcription and sustains germline development, ensuring fertility. Plays a role in the modulation of nucleolus size. May play a role in the regulation of lifespan. The polypeptide is Nucleolar protein dao-5 (Caenorhabditis elegans).